The primary structure comprises 122 residues: Large ribosomal subunit protein uL14 (122 aa).

Belongs to the universal ribosomal protein uL14 family. In terms of assembly, part of the 50S ribosomal subunit. Forms a cluster with proteins L3 and L19. In the 70S ribosome, L14 and L19 interact and together make contacts with the 16S rRNA in bridges B5 and B8.

Binds to 23S rRNA. Forms part of two intersubunit bridges in the 70S ribosome. This is Large ribosomal subunit protein uL14 from Chlamydia pneumoniae (Chlamydophila pneumoniae).